The sequence spans 478 residues: Probable serine carboxypeptidase CPVL (478 aa).

An N-terminal signal peptide occupies residues 1–22; that stretch reads MVRAKWKMVVSLILFMVSPGDG. 2 N-linked (GlcNAc...) asparagine glycosylation sites follow: asparagine 83 and asparagine 134. Residue serine 206 is part of the active site. N-linked (GlcNAc...) asparagine glycans are attached at residues asparagine 309 and asparagine 350. Catalysis depends on residues aspartate 390 and histidine 450.

The protein belongs to the peptidase S10 family.

May be involved in the digestion of phagocytosed particles in the lysosome, participation in an inflammatory protease cascade, and trimming of peptides for antigen presentation. In Mus musculus (Mouse), this protein is Probable serine carboxypeptidase CPVL (Cpvl).